The chain runs to 244 residues: Tetraspanin-7 (244 aa).

At 1-11 the chain is on the cytoplasmic side; sequence METKPVITCLK. The chain crosses the membrane as a helical span at residues 12–35; that stretch reads TLLIIYSFVFWITGVILLAVGVWG. Over 36 to 51 the chain is Extracellular; that stretch reads KLTLGTYISLIAENST. N-linked (GlcNAc...) asparagine glycosylation occurs at asparagine 49. Residues 52 to 70 form a helical membrane-spanning segment; it reads NAPYVLIGTGTTIVVFGLF. Topologically, residues 71–81 are cytoplasmic; sequence GCFATCRGSPW. The chain crosses the membrane as a helical span at residues 82–107; it reads MLKLYAMFLSLVFLAELVAGISGFVF. Topologically, residues 108 to 208 are extracellular; the sequence is RHEIKDTFLR…LVTSFMETNM (101 aa). Residues asparagine 150, asparagine 153, asparagine 172, and asparagine 183 are each glycosylated (N-linked (GlcNAc...) asparagine). The chain crosses the membrane as a helical span at residues 209–229; that stretch reads GIIAGVAFGIAFSQLIGMLLA. At 230–244 the chain is on the cytoplasmic side; it reads CCLSRFITANQYEMV.

It belongs to the tetraspanin (TM4SF) family.

Its subcellular location is the membrane. Functionally, may be involved in cell proliferation and cell motility. This Pongo pygmaeus (Bornean orangutan) protein is Tetraspanin-7 (TSPAN7).